Reading from the N-terminus, the 341-residue chain is MKALSKLKAEEGIWMTDVPEPEVGHNDLLIKIRKTAICGTDVHIYNWDEWSQKTIPVPMVVGHEYVGEVVGIGQEVKGFNIGDRVSGEGHITCGHCRNCRGGRTHLCRNTTGVGVNRPGCFAEYLVIPAFNAFKIPDNISDDLASIFDPFGNAVHTALSFDLVGEDVLVSGAGPIGVMAAAVAKHVGARHVVITDVNEYRLELARKMGVTRAVNVAKESLTDVMAELGMTEGFDVGLEMSGAPPAFRTMLDTMNHGGRIAMLGIPPADMSIDWTKVIFKGLFIKGIYGREMFETWYKMAALIQSGLDLSPIITHRFSIDDFQKGFDAMRSGQSGKVILSWD.

Cys38 lines the Zn(2+) pocket. Active-site charge relay system residues include Thr40 and His43. His63, Glu64, Cys93, Cys96, Cys99, and Cys107 together coordinate Zn(2+). NAD(+) is bound by residues Ile175, Asp195, Arg200, 262-264 (LGI), and 286-287 (IY).

The protein belongs to the zinc-containing alcohol dehydrogenase family. As to quaternary structure, homotetramer. Zn(2+) is required as a cofactor.

Its subcellular location is the cytoplasm. It catalyses the reaction L-threonine + NAD(+) = (2S)-2-amino-3-oxobutanoate + NADH + H(+). It participates in amino-acid degradation; L-threonine degradation via oxydo-reductase pathway; glycine from L-threonine: step 1/2. Functionally, catalyzes the NAD(+)-dependent oxidation of L-threonine to 2-amino-3-ketobutyrate. This Salmonella arizonae (strain ATCC BAA-731 / CDC346-86 / RSK2980) protein is L-threonine 3-dehydrogenase.